Here is a 551-residue protein sequence, read N- to C-terminus: Probable inorganic carbon transporter subunit DabB2 (551 aa).

14 helical membrane passes run 6–26 (SHTTGLLLLAMPALLLMAAVI), 42–62 (VQWTSFAAFGLALLAVVSFLF), 65–85 (QQNLMLGAGSLPAGLGLLALS), 86–106 (IQVNGLTLVLASLVSFVLSVI), 132–152 (GFFLLVVISGNLGLFTLAIIA), 187–207 (LLLAATVLIGHQIGSLEFSQI), 217–237 (LSIALHVAAWLIVLAAILKSA), 252–272 (PTPVSALMHAGVVYSGAIIVL), 284–304 (ALLLLALIGLMTLAIGSLVML), 321–341 (LGFMMLELGLGLFGLALLHLV), 374–394 (VVAWFTTVIVSGLFTLGIAAA), 404–424 (MLPAVLTIIALATAQLMLKAL), 434–454 (VAAGAAIAMTGVYVFLHEVFI), and 469–489 (PLLDLLLMAITIITFLFVAWL).

It belongs to the inorganic carbon transporter (TC 9.A.2) DabB family. In terms of assembly, forms a complex with DabA2, possibly a heterodimer.

The protein localises to the cell inner membrane. Its activity is regulated as follows. Uptake of inorganic carbon by cells in the presence of thiosulphate is fully inhibited by the uncouplers carbonyl cyanide m-chlorophenyl hydrazone (CCCP), carbonyl cyanide p-trifluoromethoxyphenyl hydrazone (FCCP), S13 or SF6847. Not inhibited by the ATPase inhibitor N,N-dicyclohexylcarbodiimide (DCCD). Inorganic carbon uptake is inhibited by the ionophore carbonyl cyanide m-chlorophenyl hydrazone (CCCP), suggesting uptake is coupled to a cation gradient. In terms of biological role, part of an energy-coupled inorganic carbon pump; its substrate may be carbon dioxide. Expression of both dabA2 and dabB2 (DAB2) restores growth in ambient air to E.coli deleted of its carbonic anhydrase genes (called CAfree, deletion of 'can' and 'cynT'); neither dabA2 or dabB2 alone is sufficient. Rescue is pH-independent, suggesting it transports CO(2) and not carbonate ions. Together the genes allow greater than normal uptake of inorganic carbon by E.coli. Uptake of carbon dioxide rather than bicarbonate has been suggested based on kinetic calculations. This is Probable inorganic carbon transporter subunit DabB2 from Halothiobacillus neapolitanus (strain ATCC 23641 / c2) (Thiobacillus neapolitanus).